A 214-amino-acid chain; its full sequence is Alpha-S1-casein (214 aa).

Positions 1–15 are cleaved as a signal peptide; sequence MKLLILTCLVAVALA. Phosphoserine is present on residues Ser-63, Ser-79, Ser-81, Ser-82, Ser-83, and Ser-90. Repeats lie at residues 85-99 and 125-140; these read EIVPISVEQKHIQKE and EIVPNLAEEQLHSMKE.

The protein belongs to the alpha-casein family. As to expression, mammary gland specific. Secreted in milk.

The protein localises to the secreted. Functionally, important role in the capacity of milk to transport calcium phosphate. The polypeptide is Alpha-S1-casein (CSN1S1) (Bubalus bubalis (Domestic water buffalo)).